A 227-amino-acid polypeptide reads, in one-letter code: DNA repair protein RecO (227 aa).

The protein belongs to the RecO family.

Functionally, involved in DNA repair and RecF pathway recombination. The protein is DNA repair protein RecO of Pseudomonas syringae pv. syringae (strain B728a).